A 289-amino-acid chain; its full sequence is Oxaloacetate decarboxylase (289 aa).

Residue Ser-47 coordinates substrate. Asp-85 serves as a coordination point for Mg(2+). Substrate contacts are provided by Arg-156 and His-232.

Belongs to the isocitrate lyase/PEP mutase superfamily. Oxaloacetate decarboxylase family. As to quaternary structure, homotetramer; dimer of dimers. It depends on Mg(2+) as a cofactor.

It carries out the reaction oxaloacetate + H(+) = pyruvate + CO2. In terms of biological role, catalyzes the decarboxylation of oxaloacetate into pyruvate. Seems to play a role in maintaining cellular concentrations of bicarbonate and pyruvate. This Rhodopseudomonas palustris (strain BisA53) protein is Oxaloacetate decarboxylase.